Reading from the N-terminus, the 395-residue chain is Cation channel sperm-associated protein 3 (395 aa).

Residues 1 to 48 (MSQHFHHNPVRVKSGSLFATASEALQARLSKIKRKDKECQAYFRKVIK) lie on the Cytoplasmic side of the membrane. Residues 49–71 (STFFQIVMITTVTTNSFLLVLGT) traverse the membrane as a helical segment. At 72–80 (NYDIQFEFF) the chain is on the extracellular side. A helical membrane pass occupies residues 81–107 (RTFEVSELFFVSVYVCEFLMKVYVDPI). A topological domain (cytoplasmic) is located at residue threonine 108. A helical transmembrane segment spans residues 109–131 (YWKDGYNILDVIILIILTIPYLL). The Extracellular segment spans residues 132 to 143 (RKIKGNHSAYLH). A helical transmembrane segment spans residues 144–160 (FADGIQSLRILKLISYS). Residues 161–168 (RGIRTLII) are Cytoplasmic-facing. The helical transmembrane segment at 169–195 (AVGETVYTVASVLTLLFLLMFVFAILG) threads the bilayer. At 196-216 (FCLFGVTDRGDLENWGNLASA) the chain is on the extracellular side. Residues 217 to 236 (FFTLFSLATVDGWTDLQEEL) constitute an intramembrane region (helical; Pore-forming). Residues 237–242 (DKRKFT) are Extracellular-facing. Residues 243–268 (VSRAFTILFILLASFIFLNMFVGVMI) form a helical membrane-spanning segment. The Cytoplasmic portion of the chain corresponds to 269–395 (MHTEDSMKKF…ESSSSLSGLS (127 aa)).

This sequence belongs to the cation channel sperm-associated (TC 1.A.1.19) family. Component of the CatSper complex or CatSpermasome composed of the core pore-forming members CATSPER1, CATSPER2, CATSPER3 and CATSPER4 as well as auxiliary members CATSPERB, CATSPERG2, CATSPERD, CATSPERE, CATSPERZ, C2CD6/CATSPERT, SLCO6C1, TMEM249, TMEM262 and EFCAB9. HSPA1 may be an additional auxiliary complex member. The core complex members CATSPER1, CATSPER2, CATSPER3 and CATSPER4 form a heterotetrameric channel. The auxiliary CATSPERB, CATSPERG2, CATSPERD and CATSPERE subunits form a pavilion-like structure over the pore which stabilizes the complex through interactions with CATSPER4, CATSPER3, CATSPER1 and CATSPER2 respectively. SLCO6C1 interacts with CATSPERE and TMEM262/CATSPERH interacts with CATSPERB, further stabilizing the complex. C2CD6/CATSPERT interacts at least with CATSPERD and is required for targeting the CatSper complex in the flagellar membrane. As to expression, testis-specific.

The protein resides in the cell projection. The protein localises to the cilium. It localises to the flagellum membrane. The catalysed reaction is Ca(2+)(in) = Ca(2+)(out). In contrast to the human ortholog, not activated by progesterone. Activated by intracellular alkalinization. Its function is as follows. Pore-forming subunit of the CatSper complex, a sperm-specific voltage-gated calcium channel that plays a central role in sperm cell hyperactivation. Controls calcium entry to mediate the hyperactivated motility, a step needed for sperm motility which is essential late in the preparation of sperm for fertilization. The polypeptide is Cation channel sperm-associated protein 3 (Catsper3) (Mus musculus (Mouse)).